The chain runs to 244 residues: uncharacterized protein (244 aa).

The next 6 helical transmembrane spans lie at 22–42, 63–83, 110–130, 140–160, 186–206, and 213–233; these read IMLQ…LLSF, FIFS…WGLT, VILL…EAFA, IMSL…NLTV, GVLF…IFQL, and AVFD…MLVV.

Its subcellular location is the cell membrane. This is an uncharacterized protein from Haemophilus influenzae (strain ATCC 51907 / DSM 11121 / KW20 / Rd).